The chain runs to 946 residues: Protein dct-6 (946 aa).

A coiled-coil region spans residues 326–363; it reads YMDMNDQIEQMIALLVDQLEELEKLEQLCDEVQKTGNQ.

May have a role in tumor suppression. This Caenorhabditis briggsae protein is Protein dct-6.